The following is a 493-amino-acid chain: 5'-3' exonuclease PLD3 (493 aa).

Residues 1–37 (MSSKVEYKPIQPHEEAENHFLQHELHKVKARKYYRCA) are Cytoplasmic-facing. A helical; Signal-anchor for type II membrane protein membrane pass occupies residues 38–58 (LVVAIIITLVFCILASQLLLF). At 59 to 493 (PFLSITSQTT…LSSWKEKCIF (435 aa)) the chain is on the lumenal side. An N-linked (GlcNAc...) asparagine glycan is attached at Asn99. The region spanning 197–224 (TDGILHTKFWVVDNEHFYIGSANMDWRS) is the PLD phosphodiesterase 1 domain. Residues His202, Lys204, and Asp209 contribute to the active site. Asn237, Asn259, Asn269, Asn285, and Asn388 each carry an N-linked (GlcNAc...) asparagine glycan. Residues 412–438 (YARVNHNKYMVTDRVAYIGTSNWSGDY) enclose the PLD phosphodiesterase 2 domain. Catalysis depends on residues His417, Lys419, and Asp424. Asn433, Asn450, and Asn476 each carry an N-linked (GlcNAc...) asparagine glycan.

This sequence belongs to the phospholipase D family. In terms of processing, N-glycosylated. Proteolytically processed to a soluble form that is stable within endosomes and lysosomes. During transport through the secretory pathway becomes proteolysed by cysteine proteases, thereby releasing a stable soluble lysosomal lumenal polypeptide, whereas the transmembrane-bound fragment is rapidly degraded. Its transport route to lysosomes involves ubiquitination and the ESCRT complex. Post-translationally, ubiquitinated. Ubiquitination mediates sorting into lysosomes.

It localises to the endoplasmic reticulum membrane. Its subcellular location is the lysosome lumen. The protein resides in the early endosome membrane. It is found in the late endosome membrane. The protein localises to the golgi apparatus membrane. It localises to the endosome membrane. It carries out the reaction Exonucleolytic cleavage in the 5'- to 3'-direction to yield nucleoside 3'-phosphates.. Its function is as follows. 5'-&gt;3' DNA exonuclease which digests single-stranded DNA (ssDNA). Regulates inflammatory cytokine responses via the degradation of nucleic acids, by reducing the concentration of ssDNA able to stimulate TLR9, a nucleotide-sensing receptor in collaboration with PLD4. May be important in myotube formation. Plays a role in lysosomal homeostasis. Involved in the regulation of endosomal protein sorting. The sequence is that of 5'-3' exonuclease PLD3 (pld3) from Xenopus laevis (African clawed frog).